Reading from the N-terminus, the 1235-residue chain is ATP-dependent DNA helicase mph1 (1235 aa).

Disordered regions lie at residues 20–78 (LTQA…YRIH) and 96–148 (DEMP…VHSP). The segment covering 61–72 (SRSDNDEADEKK) has biased composition (basic and acidic residues). Positions 137-148 (AKTQKQNIVHSP) are enriched in polar residues. The Helicase ATP-binding domain occupies 272 to 440 (IVHKGLFNNL…EVIDNLEIAE (169 aa)). 285–292 (LPTGLGKT) serves as a coordination point for ATP. Positions 388–391 (DEAH) match the DEAH box motif. Residues 608–784 (KLTYLCDTVL…GSRFTFRHDL (177 aa)) form the Helicase C-terminal domain. Disordered regions lie at residues 808–827 (NTQDPSLPEPKRRAKPRKKL), 944–1117 (SRLQ…PPLM), and 1144–1235 (TGAK…DSDE). A compositionally biased stretch (basic and acidic residues) spans 947-958 (QRPEDRDNKPYG). Residues 1015–1027 (VAPKKAKPRRGRA) are compositionally biased toward basic residues. The segment covering 1065–1074 (PGERVDRTSD) has biased composition (basic and acidic residues). The span at 1075–1085 (MEELEADDDSD) shows a compositional bias: acidic residues. 2 stretches are compositionally biased toward polar residues: residues 1095–1114 (PTQTQTQIPLTGTSNFSSSP) and 1146–1159 (AKNSSFKNGTMTQE). Low complexity predominate over residues 1160 to 1170 (SSDGGDSMDSD). Positions 1194–1209 (PSSSVFSSGQKATPNM) are enriched in polar residues.

Belongs to the DEAD box helicase family. DEAH subfamily. FANCM sub-subfamily. In terms of assembly, interacts with the MHF histone-fold complex to form the FANCM-MHF complex.

It localises to the nucleus. The enzyme catalyses ATP + H2O = ADP + phosphate + H(+). Functionally, ATP-dependent DNA helicase involved in DNA damage repair by homologous recombination and in genome maintenance. Capable of unwinding D-loops. Plays a role in limiting crossover recombinants during mitotic DNA double-strand break (DSB) repair. Component of a FANCM-MHF complex which promotes gene conversion at blocked replication forks, probably by reversal of the stalled fork. The polypeptide is ATP-dependent DNA helicase mph1 (Sclerotinia sclerotiorum (strain ATCC 18683 / 1980 / Ss-1) (White mold)).